The chain runs to 207 residues: 2,3-bisphosphoglycerate-dependent phosphoglycerate mutase (207 aa).

Substrate-binding positions include arginine 10 to asparagine 17, threonine 23 to glycine 24, arginine 62, glutamate 89 to tyrosine 92, lysine 100, arginine 116 to arginine 117, and glycine 160 to asparagine 161. Catalysis depends on histidine 11, which acts as the Tele-phosphohistidine intermediate. Glutamate 89 functions as the Proton donor/acceptor in the catalytic mechanism.

The protein belongs to the phosphoglycerate mutase family. BPG-dependent PGAM subfamily. As to quaternary structure, homodimer.

The enzyme catalyses (2R)-2-phosphoglycerate = (2R)-3-phosphoglycerate. The protein operates within carbohydrate degradation; glycolysis; pyruvate from D-glyceraldehyde 3-phosphate: step 3/5. In terms of biological role, catalyzes the interconversion of 2-phosphoglycerate and 3-phosphoglycerate. The protein is 2,3-bisphosphoglycerate-dependent phosphoglycerate mutase of Bradyrhizobium sp. (strain BTAi1 / ATCC BAA-1182).